The chain runs to 686 residues: tRNA 5-methylaminomethyl-2-thiouridine biosynthesis bifunctional protein MnmC (686 aa).

The tract at residues 1–258 (MPNIPLRVNS…RRALRRQQLD (258 aa)) is tRNA (mnm(5)s(2)U34)-methyltransferase. The interval 276–686 (IGGGVASANL…MRKLIKGKAL (411 aa)) is FAD-dependent cmnm(5)s(2)U34 oxidoreductase.

The protein in the N-terminal section; belongs to the methyltransferase superfamily. tRNA (mnm(5)s(2)U34)-methyltransferase family. In the C-terminal section; belongs to the DAO family. The cofactor is FAD.

It is found in the cytoplasm. It catalyses the reaction 5-aminomethyl-2-thiouridine(34) in tRNA + S-adenosyl-L-methionine = 5-methylaminomethyl-2-thiouridine(34) in tRNA + S-adenosyl-L-homocysteine + H(+). In terms of biological role, catalyzes the last two steps in the biosynthesis of 5-methylaminomethyl-2-thiouridine (mnm(5)s(2)U) at the wobble position (U34) in tRNA. Catalyzes the FAD-dependent demodification of cmnm(5)s(2)U34 to nm(5)s(2)U34, followed by the transfer of a methyl group from S-adenosyl-L-methionine to nm(5)s(2)U34, to form mnm(5)s(2)U34. This Shewanella loihica (strain ATCC BAA-1088 / PV-4) protein is tRNA 5-methylaminomethyl-2-thiouridine biosynthesis bifunctional protein MnmC.